The primary structure comprises 276 residues: Glutamate racemase (276 aa).

Residues 12 to 13 (DS) and 44 to 45 (YG) each bind substrate. The Proton donor/acceptor role is filled by Cys76. 77–78 (NT) contacts substrate. The active-site Proton donor/acceptor is the Cys187. Position 188–189 (188–189 (TH)) interacts with substrate.

The protein belongs to the aspartate/glutamate racemases family.

It catalyses the reaction L-glutamate = D-glutamate. The protein operates within cell wall biogenesis; peptidoglycan biosynthesis. Functionally, provides the (R)-glutamate required for cell wall biosynthesis. The sequence is that of Glutamate racemase from Granulibacter bethesdensis (strain ATCC BAA-1260 / CGDNIH1).